A 434-amino-acid polypeptide reads, in one-letter code: Cysteine proteinase 6 (434 aa).

Residues 1–19 (MKVLSALCVLLVSVATAKQ) form the signal peptide. Residues 20 to 113 (QLSELQYRNA…SEKVFGGVQA (94 aa)) constitute a propeptide, activation peptide. 2 disulfide bridges follow: cysteine 133–cysteine 178 and cysteine 169–cysteine 211. Cysteine 136 is a catalytic residue. An N-linked (GlcNAc...) asparagine glycan is attached at asparagine 227. Cysteine 269 and cysteine 416 form a disulfide bridge. Histidine 276 is an active-site residue. The disordered stretch occupies residues 285–384 (SGSSGSQSQS…GGNSNSGDYP (100 aa)). Residues 288–347 (SGSQSQSAGSQSQSSNNNWSESSQSQDSNSWSQSSQSQSSQDSNSWSQSSQSQGSNSFTG) show a composition bias toward low complexity. N-linked (GlcNAc...) asparagine glycosylation occurs at asparagine 305. Positions 348–358 (AGTGSGSGSVS) are enriched in gly residues. A compositionally biased stretch (low complexity) spans 359-381 (GSGSASGSSSFSGSSNGGNSNSG). Asparagine 394 is a catalytic residue.

Belongs to the peptidase C1 family.

The protein resides in the lysosome. This Dictyostelium discoideum (Social amoeba) protein is Cysteine proteinase 6 (cprF).